Consider the following 278-residue polypeptide: Urease accessory protein UreD (278 aa).

Belongs to the UreD family. As to quaternary structure, ureD, UreF and UreG form a complex that acts as a GTP-hydrolysis-dependent molecular chaperone, activating the urease apoprotein by helping to assemble the nickel containing metallocenter of UreC. The UreE protein probably delivers the nickel.

It localises to the cytoplasm. Required for maturation of urease via the functional incorporation of the urease nickel metallocenter. The chain is Urease accessory protein UreD from Escherichia coli.